Here is an 88-residue protein sequence, read N- to C-terminus: Large ribosomal subunit protein bL31B (88 aa).

Belongs to the bacterial ribosomal protein bL31 family. Type B subfamily. As to quaternary structure, part of the 50S ribosomal subunit.

The sequence is that of Large ribosomal subunit protein bL31B from Paraburkholderia phytofirmans (strain DSM 17436 / LMG 22146 / PsJN) (Burkholderia phytofirmans).